The primary structure comprises 776 residues: Glucocorticoid receptor (776 aa).

Over residues 1 to 11 (MDSKESLTSPS) the composition is skewed to polar residues. Positions 1-25 (MDSKESLTSPSEEIPSSVHGQERGN) are disordered. Positions 1–419 (MDSKESLTSP…LSAVGPPPKF (419 aa)) are modulating. Phosphothreonine is present on T8. An Omega-N-methylarginine modification is found at R23. Phosphoserine occurs at positions 45, 113, and 134. The tract at residues 157 to 178 (PETPSDVSSEQQNLKGQTGTNG) is disordered. Residues 161–174 (SDVSSEQQNLKGQT) show a composition bias toward polar residues. A phosphoserine mark is found at S203, S211, and S226. A Glycyl lysine isopeptide (Lys-Gly) (interchain with G-Cter in SUMO2) cross-link involves residue K258. S267 carries the phosphoserine modification. Glycyl lysine isopeptide (Lys-Gly) (interchain with G-Cter in SUMO); alternate cross-links involve residues K277 and K293. Glycyl lysine isopeptide (Lys-Gly) (interchain with G-Cter in SUMO2); alternate cross-links involve residues K277 and K293. Phosphoserine occurs at positions 307 and 404. Residues 417 to 492 (PKFCLVCSDE…AGMNLEARKT (76 aa)) constitute a DNA-binding region (nuclear receptor). A Glycyl lysine isopeptide (Lys-Gly) (interchain with G-Cter in ubiquitin) cross-link involves residue K418. 2 NR C4-type zinc fingers span residues 420–440 (CLVC…CGSC) and 456–480 (CAGR…YRKC). An N6-acetyllysine mark is found at K479, K491, K493, and K494. Residues 484 to 776 (GMNLEARKTK…NIKKLLFHQK (293 aa)) form an interaction with CLOCK region. Positions 486 to 522 (NLEARKTKKKIKGIQQTTTGISQETPENSANKTIVPA) are hinge. The region spanning 523–757 (TLPQLTPTPV…FPEMLAEIIT (235 aa)) is the NR LBD domain. Positions 531–696 (PVSLLEVIEP…EIRMTYIKEL (166 aa)) are interaction with CRY1. A Glycyl lysine isopeptide (Lys-Gly) (interchain with G-Cter in SUMO) cross-link involves residue K702.

This sequence belongs to the nuclear hormone receptor family. NR3 subfamily. In terms of assembly, heteromultimeric cytoplasmic complex with HSP90AA1, HSPA1A/HSPA1B, and FKBP5 or another immunophilin such as PPID, STIP1, or the immunophilin homolog PPP5C. Upon ligand binding FKBP5 dissociates from the complex and FKBP4 takes its place, thereby linking the complex to dynein and mediating transport to the nucleus, where the complex dissociates. Probably forms a complex composed of chaperones HSP90 and HSP70, co-chaperones CDC37, PPP5C, TSC1 and client protein TSC2, CDK4, AKT, RAF1 and NR3C1; this complex does not contain co-chaperones STIP1/HOP and PTGES3/p23. Directly interacts with UNC45A. Binds to DNA as a homodimer, and as heterodimer with NR3C2 or the retinoid X receptor. Binds STAT5A and STAT5B homodimers and heterodimers. Interacts with NRIP1, POU2F1, POU2F2 and TRIM28. Interacts with several coactivator complexes, including the SMARCA4 complex, CREBBP/EP300, TADA2L (Ada complex) and p160 coactivators such as NCOA2 and NCOA6. Interaction with BAG1 inhibits transactivation. Interacts with HEXIM1 and TGFB1I1. Interacts with NCOA1. Interacts with NCOA3, SMARCA4, SMARCC1, SMARCD1, and SMARCE1. Interacts with CLOCK, CRY1 and CRY2 in a ligand-dependent fashion. Interacts with CIART. Interacts with RWDD3. Interacts with UBE2I/UBC9 and this interaction is enhanced in the presence of RWDD3. Interacts with GRIP1. Interacts with NR4A3 (via nuclear receptor DNA-binding domain), represses transcription activity of NR4A3 on the POMC promoter Nur response element (NurRE). Directly interacts with PNRC2 to attract and form a complex with UPF1 and DCP1A; the interaction leads to rapid mRNA degradation. Interacts with GSK3B. Interacts with FNIP1 and FNIP2. Interacts (via C-terminus) with NR3C1 (via C-terminus). Interacts with MCM3AP. Interacts (via domain NR LBD) with HSP90AA1 and HSP90AB1. In the absence of hormonal ligand, interacts with TACC1. Post-translationally, acetylation by CLOCK reduces its binding to glucocorticoid response elements and its transcriptional activity. In terms of processing, increased proteasome-mediated degradation in response to glucocorticoids. Phosphorylated in the absence of hormone; becomes hyperphosphorylated in the presence of glucocorticoid. The Ser-203, Ser-226 and Ser-404-phosphorylated forms are mainly cytoplasmic, and the Ser-211-phosphorylated form is nuclear. Phosphorylation at Ser-211 increases transcriptional activity. Phosphorylation at Ser-203, Ser-226 and Ser-404 decreases signaling capacity. Phosphorylation at Ser-404 may protect from glucocorticoid-induced apoptosis. Phosphorylation at Ser-203 and Ser-211 is not required in regulation of chromosome segregation. May be dephosphorylated by PPP5C, attenuates NR3C1 action. Post-translationally, sumoylation at Lys-277 and Lys-293 negatively regulates its transcriptional activity. Sumoylation at Lys-702 positively regulates its transcriptional activity in the presence of RWDD3. Sumoylation at Lys-277 and Lys-293 is dispensable whereas sumoylation at Lys-702 is critical for the stimulatory effect of RWDD3 on its transcriptional activity. Heat shock increases sumoylation in a RWDD3-dependent manner. In terms of processing, ubiquitinated by UBR5, leading to its degradation: UBR5 specifically recognizes and binds ligand-bound NR3C1 when it is not associated with coactivators (NCOAs). In presence of NCOAs, the UBR5-degron is not accessible, preventing its ubiquitination and degradation.

Its subcellular location is the cytoplasm. It is found in the nucleus. The protein resides in the mitochondrion. The protein localises to the cytoskeleton. It localises to the spindle. Its subcellular location is the microtubule organizing center. It is found in the centrosome. The protein resides in the chromosome. The protein localises to the nucleoplasm. Its function is as follows. Receptor for glucocorticoids (GC). Has a dual mode of action: as a transcription factor that binds to glucocorticoid response elements (GRE), both for nuclear and mitochondrial DNA, and as a modulator of other transcription factors. Affects inflammatory responses, cellular proliferation and differentiation in target tissues. Involved in chromatin remodeling. Plays a role in rapid mRNA degradation by binding to the 5' UTR of target mRNAs and interacting with PNRC2 in a ligand-dependent manner which recruits the RNA helicase UPF1 and the mRNA-decapping enzyme DCP1A, leading to RNA decay. Could act as a coactivator for STAT5-dependent transcription upon growth hormone (GH) stimulation and could reveal an essential role of hepatic GR in the control of body growth. Mediates glucocorticoid-induced apoptosis. Promotes accurate chromosome segregation during mitosis. May act as a tumor suppressor. May play a negative role in adipogenesis through the regulation of lipolytic and antilipogenic gene expression. This chain is Glucocorticoid receptor (NR3C1), found in Tupaia belangeri (Common tree shrew).